We begin with the raw amino-acid sequence, 503 residues long: Transforming protein rel polyprotein (503 aa).

In terms of domain architecture, RHD spans 16 to 305; it reads PYIEIFEQPR…GNKAKRQRST (290 aa). Ser275 bears the Phosphoserine; by host PKA mark. Disordered regions lie at residues 286 to 306 and 318 to 342; these read RYLP…RSTL and AVTE…KEPN. The short motif at 298 to 303 is the Nuclear localization signal element; the sequence is KAKRQR.

Its subcellular location is the host cytoplasm. In terms of biological role, this transforming protein appears to have a protein-kinase activity. This Galliformes protein is Transforming protein rel polyprotein (V-REL).